Reading from the N-terminus, the 268-residue chain is MAKRGESLRDKPKWSLEGMTALVTGGSKGLGKAVVEELAMLGARVHTCARDETQLQESLREWQAKGLQVTTSVCDVSSRDQREKLMETVSSLFQGKLSILVPNVGIGVLKPTTECTAEEFSFIIATNLESTFHFSQLAHPLLKASGSGNIVLMSSVAGVVNLGNTSIYGATKGAMNQLARNLACEWASDNIRANSVCPWFITTPSTKDFLGDKDVKEKVESVTPLRRVGEANEVSSLVAFLCLPAASYITGQTICVDGGFTINGFSLP.

Position 22-46 (22-46 (LVTGGSKGLGKAVVEELAMLGARVH)) interacts with NADP(+). Serine 155 is a binding site for substrate. Tyrosine 168 serves as the catalytic Proton acceptor.

It belongs to the short-chain dehydrogenases/reductases (SDR) family. SDR65C subfamily.

The chain is Tropinone reductase homolog At2g29370 from Arabidopsis thaliana (Mouse-ear cress).